The following is a 417-amino-acid chain: Mast cell carboxypeptidase A (417 aa).

Positions 1-15 (MRLILPVGLIATTLA) are cleaved as a signal peptide. Positions 16–109 (IAPVRFDREK…IEKQFDVKED (94 aa)) are cleaved as a propeptide — activation peptide. The 295-residue stretch at 118 to 412 (KYNNWEKIVA…LAVKFIAKYI (295 aa)) folds into the Peptidase M14 domain. Intrachain disulfides connect cysteine 173/cysteine 186 and cysteine 245/cysteine 268. Positions 176 and 179 each coordinate Zn(2+). Histidine 304 contributes to the Zn(2+) binding site. Catalysis depends on glutamate 378, which acts as the Proton donor/acceptor.

The protein belongs to the peptidase M14 family. The cofactor is Zn(2+).

Its subcellular location is the cytoplasmic vesicle. It is found in the secretory vesicle. The catalysed reaction is Release of a C-terminal amino acid, but little or no action with -Asp, -Glu, -Arg, -Lys or -Pro.. This Homo sapiens (Human) protein is Mast cell carboxypeptidase A (CPA3).